A 305-amino-acid chain; its full sequence is Aspartate carbamoyltransferase catalytic subunit (305 aa).

2 residues coordinate carbamoyl phosphate: Arg54 and Thr55. Lys83 contacts L-aspartate. Carbamoyl phosphate is bound by residues Arg104, His132, and Gln135. L-aspartate contacts are provided by Arg165 and Arg226. The carbamoyl phosphate site is built by Leu265 and Pro266.

This sequence belongs to the aspartate/ornithine carbamoyltransferase superfamily. ATCase family. Heterooligomer of catalytic and regulatory chains.

It catalyses the reaction carbamoyl phosphate + L-aspartate = N-carbamoyl-L-aspartate + phosphate + H(+). It participates in pyrimidine metabolism; UMP biosynthesis via de novo pathway; (S)-dihydroorotate from bicarbonate: step 2/3. Functionally, catalyzes the condensation of carbamoyl phosphate and aspartate to form carbamoyl aspartate and inorganic phosphate, the committed step in the de novo pyrimidine nucleotide biosynthesis pathway. This is Aspartate carbamoyltransferase catalytic subunit from Pyrobaculum arsenaticum (strain DSM 13514 / JCM 11321 / PZ6).